A 459-amino-acid chain; its full sequence is Nucleobindin-1 (459 aa).

Residues M1–A25 form the signal peptide. S85 is subject to Phosphoserine. T147 carries the post-translational modification Phosphothreonine. Residues E149–K217 adopt a coiled-coil conformation. The DNA-binding element occupies H171–K217. The span at S192–Q209 shows a compositional bias: basic and acidic residues. Residues S192–V220 are disordered. The interval L227 to T320 is binds to GNAI2 and GNAI3. EF-hand domains lie at P239–K274 and E291–G326. Residues D252, N254, D256, E263, D304, N306, D308, and E315 each coordinate Ca(2+). The short motif at N302–W332 is the GBA element. Residues A340 to A407 adopt a coiled-coil conformation. S368 carries the phosphoserine modification. Positions L393–L459 are disordered. Positions D433–P445 are enriched in basic and acidic residues. S456 is modified (phosphoserine).

The protein belongs to the nucleobindin family. As to quaternary structure, interacts (via GBA motif) with guanine nucleotide-binding protein G(i) alpha subunits GNAI1, GNAI2 and GNAI3 with higher affinity for GNAI1 and GNAI3 than for GNAI2. Preferentially interacts with inactive rather than active GNAI3. Interaction with GNAI3 is inhibited when NUCB1 binds calcium, probably due to a conformational change which renders the GBA motif inaccessible. As to expression, minor constituent of the mineralized matrix of bone. Detected in calvaria, rib cartilage, liver, kidney, spleen, brain, lung, skeletal and heart muscle with highest expression in calvaria and approximately half the amount in kidney, liver and brain.

It localises to the golgi apparatus. Its subcellular location is the cis-Golgi network membrane. The protein resides in the cytoplasm. It is found in the secreted. Functionally, major calcium-binding protein of the Golgi which may have a role in calcium homeostasis. Acts as a non-receptor guanine nucleotide exchange factor which binds to and activates alpha subunits of guanine nucleotide-binding proteins (G proteins). The polypeptide is Nucleobindin-1 (Nucb1) (Rattus norvegicus (Rat)).